Reading from the N-terminus, the 494-residue chain is Poly(3-hydroxybutyrate) depolymerase (494 aa).

An N-terminal signal peptide occupies residues 1–25 (MAFNFIRAAAAGAAMALCGVGSVHA). Catalysis depends on Ser45, which acts as the Nucleophile. Residues Asp132 and His166 each act as charge relay system in the active site. The region spanning 347-431 (APTGVSTSGA…AAASGTTLAA (85 aa)) is the Fibronectin type-III domain.

The protein belongs to the AB hydrolase superfamily. Lipase family.

It is found in the secreted. The catalysed reaction is [(3R)-hydroxybutanoate](n) + H2O = [(3R)-hydroxybutanoate](n-2) + (3R)-hydroxybutanoate dimer + H(+). It carries out the reaction [(3R)-hydroxybutanoate](n) + H2O = [(3R)-hydroxybutanoate](n-1) + (R)-3-hydroxybutanoate + H(+). It catalyses the reaction (3R)-hydroxybutanoate dimer + H2O = 2 (R)-3-hydroxybutanoate + H(+). Catalyzes the hydrolysis of poly(3-hydroxybutyrate) (PHB) film, producing the monomer and dimer of 3-hydroxybutyrate (3HB), while the 3HB trimer and tetramer are not formed. The polypeptide is Poly(3-hydroxybutyrate) depolymerase (Delftia acidovorans (Pseudomonas acidovorans)).